Here is a 449-residue protein sequence, read N- to C-terminus: GTP-binding protein A (449 aa).

Residues 1–77 (MFNINPYKSK…LSSKTENSLS (77 aa)) form a disordered region. 2 stretches are compositionally biased toward low complexity: residues 8–46 (KSKTTKSSSSSSASPKSSKISNVSGSGSSSSSSSSSSSS) and 67–77 (SLSSKTENSLS). One can recognise an AIG1-type G domain in the interval 149-386 (QNECNVLLLG…FMGHLRAKNK (238 aa)). The segment at 158 to 165 (GRTGVGKS) is G1. 158-165 (GRTGVGKS) lines the GTP pocket. Residues 183–187 (SCTQD) are G2. Residues 204 to 207 (DTPG) form a G3 region. The tract at residues 275–278 (TYAN) is G4. Residues 336-338 (ENS) form a G5 region.

The protein belongs to the TRAFAC class TrmE-Era-EngA-EngB-Septin-like GTPase superfamily. AIG1/Toc34/Toc159-like paraseptin GTPase family. IAN subfamily.

The chain is GTP-binding protein A (gtpA) from Dictyostelium discoideum (Social amoeba).